The chain runs to 280 residues: Formamidopyrimidine-DNA glycosylase (280 aa).

Catalysis depends on Pro-2, which acts as the Schiff-base intermediate with DNA. The Proton donor role is filled by Glu-3. Residue Lys-58 is the Proton donor; for beta-elimination activity of the active site. DNA-binding residues include His-91, Arg-110, and Arg-152. The FPG-type zinc-finger motif lies at 237-271 (NVYGRENLPCPQCDSAIEKVVLNQRAAYFCSNCQK). The active-site Proton donor; for delta-elimination activity is the Arg-261.

It belongs to the FPG family. In terms of assembly, monomer. Requires Zn(2+) as cofactor.

It catalyses the reaction Hydrolysis of DNA containing ring-opened 7-methylguanine residues, releasing 2,6-diamino-4-hydroxy-5-(N-methyl)formamidopyrimidine.. It carries out the reaction 2'-deoxyribonucleotide-(2'-deoxyribose 5'-phosphate)-2'-deoxyribonucleotide-DNA = a 3'-end 2'-deoxyribonucleotide-(2,3-dehydro-2,3-deoxyribose 5'-phosphate)-DNA + a 5'-end 5'-phospho-2'-deoxyribonucleoside-DNA + H(+). Involved in base excision repair of DNA damaged by oxidation or by mutagenic agents. Acts as a DNA glycosylase that recognizes and removes damaged bases. Has a preference for oxidized purines, such as 7,8-dihydro-8-oxoguanine (8-oxoG). Has AP (apurinic/apyrimidinic) lyase activity and introduces nicks in the DNA strand. Cleaves the DNA backbone by beta-delta elimination to generate a single-strand break at the site of the removed base with both 3'- and 5'-phosphates. This is Formamidopyrimidine-DNA glycosylase from Hydrogenovibrio crunogenus (strain DSM 25203 / XCL-2) (Thiomicrospira crunogena).